The sequence spans 249 residues: 3-deoxy-manno-octulosonate cytidylyltransferase (249 aa).

It belongs to the KdsB family.

The protein localises to the cytoplasm. It catalyses the reaction 3-deoxy-alpha-D-manno-oct-2-ulosonate + CTP = CMP-3-deoxy-beta-D-manno-octulosonate + diphosphate. It participates in nucleotide-sugar biosynthesis; CMP-3-deoxy-D-manno-octulosonate biosynthesis; CMP-3-deoxy-D-manno-octulosonate from 3-deoxy-D-manno-octulosonate and CTP: step 1/1. It functions in the pathway bacterial outer membrane biogenesis; lipopolysaccharide biosynthesis. Functionally, activates KDO (a required 8-carbon sugar) for incorporation into bacterial lipopolysaccharide in Gram-negative bacteria. The sequence is that of 3-deoxy-manno-octulosonate cytidylyltransferase from Brucella anthropi (strain ATCC 49188 / DSM 6882 / CCUG 24695 / JCM 21032 / LMG 3331 / NBRC 15819 / NCTC 12168 / Alc 37) (Ochrobactrum anthropi).